The primary structure comprises 186 residues: Ras-related protein rapA (186 aa).

Residue 12–19 coordinates GTP; sequence GSGGVGKS. The Effector region signature appears at 34–42; that stretch reads YDPTIEDSY. GTP contacts are provided by residues 59–63 and 118–121; these read DTAGT and NKCD. Cys-183 is modified (cysteine methyl ester). Residue Cys-183 is the site of S-geranylgeranyl cysteine attachment. The propeptide at 184-186 is removed in mature form; it reads ALL.

This sequence belongs to the small GTPase superfamily. Ras family. In terms of assembly, interacts with ralGDS (only when rapA is in its GTP-bound state). Interacts with the Rap guanine nucleotide exchange factor glfB.

Its subcellular location is the cell membrane. The catalysed reaction is GTP + H2O = GDP + phosphate + H(+). Its function is as follows. G protein of the Ras family that positively regulates phagocytosis and negatively regulates macropinocytosis. May be involved in the activation of guanylyl cyclase during the response to hyperosmotic conditions. Overexpressing cells generate alterations in cell shape and contractile responses. Involved in chemotaxis via regulation of the balance of Ras and Rap signaling at the leading edge of chemotaxing cells. In Dictyostelium discoideum (Social amoeba), this protein is Ras-related protein rapA (rapA).